The sequence spans 233 residues: AA9 family lytic polysaccharide monooxygenase A (233 aa).

The signal sequence occupies residues 1–17; the sequence is MKLTTSVALLAAAGAQA. Residues H18 and H90 each contribute to the Cu(2+) site. 2 disulfides stabilise this stretch: C59–C180 and C150–C233. The N-linked (GlcNAc...) asparagine glycan is linked to N132. O2-binding residues include H166 and Q175. Y177 is a binding site for Cu(2+).

The protein belongs to the polysaccharide monooxygenase AA9 family. Requires Cu(2+) as cofactor.

It is found in the secreted. It catalyses the reaction [(1-&gt;4)-beta-D-glucosyl]n+m + reduced acceptor + O2 = 4-dehydro-beta-D-glucosyl-[(1-&gt;4)-beta-D-glucosyl]n-1 + [(1-&gt;4)-beta-D-glucosyl]m + acceptor + H2O.. Functionally, lytic polysaccharide monooxygenase (LPMO) that depolymerizes crystalline and amorphous polysaccharides via the oxidation of scissile alpha- or beta-(1-4)-glycosidic bonds, yielding C1 and C4 oxidation products. Catalysis by LPMOs requires the reduction of the active-site copper from Cu(II) to Cu(I) by a reducing agent and H(2)O(2) or O(2) as a cosubstrate. Shows endoglucanase activity on tamarind xyloglucan, as well as on beechwood xylan when combined with phosphoric acid swollen cellulose (PASC). Shows no activity on wheat arabinoxylan, konjac glucomannan, acetylated spruce galactoglucomannan, or cellopentaose. The sequence is that of AA9 family lytic polysaccharide monooxygenase A from Thermothielavioides terrestris (strain ATCC 38088 / NRRL 8126) (Thielavia terrestris).